Here is a 72-residue protein sequence, read N- to C-terminus: Potassium channel toxin epsilon-KTx 1.1 (72 aa).

The first 30 residues, 1–30 (MKLSCGFLLILLVLSAMIATFSEVEAMKPS), serve as a signal peptide directing secretion. 4 disulfide bridges follow: C34–C42, C37–C58, C41–C51, and C46–C56. A propeptide spanning residues 60–72 (GRSDLNDELEKYQ) is cleaved from the precursor.

The protein belongs to the short scorpion toxin superfamily. Potassium channel inhibitor family. Epsilon-KTx 01 subfamily. In terms of tissue distribution, expressed by the venom gland.

The protein resides in the secreted. Functionally, potassium channel blocker. At 3 uM, this toxin blocks voltage-independently voltage-gated potassium channels rKv1.2/KCNA2 (25%), hKv1.3/KCNA3 (27%), rKv4.2/KCND2 (25%), Kv10.1/KCNH1/EAG1 (15%), Kv11/hERG (12%), and Shaker-IR (10%). On hKv1.3/KCNA3, the IC(50) is 17.1 +-3.3 uM. This is Potassium channel toxin epsilon-KTx 1.1 from Tityus serrulatus (Brazilian scorpion).